Reading from the N-terminus, the 595-residue chain is Merlin (595 aa).

Ser13 is subject to Phosphoserine. In terms of domain architecture, FERM spans 22 to 311 (FTVRIVTMDA…GNHDLFMRRR (290 aa)). Ser518 is modified (phosphoserine; by PAK).

As to quaternary structure, interacts with NHERF1, HGS and AGAP2. Interacts with LAYN. Interacts with SGSM3. Interacts (via FERM domain) with MPP1. Interacts with WWC1. Interacts with the CUL4A-RBX1-DDB1-VprBP/DCAF1 E3 ubiquitin-protein ligase complex. The unphosphorylated form interacts (via FERM domain) with VPRBP/DCAF1. Interacts (via FERM domain) with NOP53; the interaction is direct. Interacts with SCHIP1; the interaction is direct. Post-translationally, phosphorylation of Ser-518 inhibits nuclear localization by disrupting the intramolecular association of the FERM domain with the C-terminal tail. The dephosphorylation of Ser-518 favors the interaction with NOP53. In terms of processing, ubiquitinated by the CUL4A-RBX1-DDB1-DCAF1/VprBP E3 ubiquitin-protein ligase complex for ubiquitination and subsequent proteasome-dependent degradation. Widely expressed. Isoform 1 and isoform 3 are predominant. Isoform 4, isoform 5 and isoform 6 are expressed moderately. Isoform 8 is found at low frequency. Isoform 7, isoform 9 and isoform 10 are not expressed in adult tissues, with the exception of adult retina expressing isoform 10. Isoform 9 is faintly expressed in fetal brain, heart, lung, skeletal muscle and spleen. Fetal thymus expresses isoforms 1, 7, 9 and 10 at similar levels.

It is found in the cell projection. It localises to the filopodium membrane. The protein resides in the ruffle membrane. Its subcellular location is the nucleus. The protein localises to the cytoplasm. It is found in the perinuclear region. It localises to the cytoplasmic granule. The protein resides in the cytoskeleton. Probable regulator of the Hippo/SWH (Sav/Wts/Hpo) signaling pathway, a signaling pathway that plays a pivotal role in tumor suppression by restricting proliferation and promoting apoptosis. Along with WWC1 can synergistically induce the phosphorylation of LATS1 and LATS2 and can probably function in the regulation of the Hippo/SWH (Sav/Wts/Hpo) signaling pathway. May act as a membrane stabilizing protein. May inhibit PI3 kinase by binding to AGAP2 and impairing its stimulating activity. Suppresses cell proliferation and tumorigenesis by inhibiting the CUL4A-RBX1-DDB1-VprBP/DCAF1 E3 ubiquitin-protein ligase complex. The polypeptide is Merlin (NF2) (Homo sapiens (Human)).